The sequence spans 231 residues: Probable transglycosylase SceD (231 aa).

The first 27 residues, 1–27, serve as a signal peptide directing secretion; that stretch reads MKKTLLASSLAVGLGIVAGNAGHEAHA. Residues 93 to 116 show a composition bias toward polar residues; sequence SAQAPATNNVEPSAVQANQVQSQE. The segment at 93 to 152 is disordered; that stretch reads SAQAPATNNVEPSAVQANQVQSQEVEAPQNAQTQQPQASTSNNSQVTATPTESKASEGSS. Low complexity predominate over residues 119–137; the sequence is APQNAQTQQPQASTSNNSQ. Residues 138–152 show a composition bias toward polar residues; sequence VTATPTESKASEGSS.

The protein belongs to the transglycosylase family. SceD subfamily.

The protein localises to the secreted. In terms of biological role, is able to cleave peptidoglycan and affects clumping and separation of bacterial cells. The polypeptide is Probable transglycosylase SceD (sceD) (Staphylococcus aureus (strain Mu3 / ATCC 700698)).